A 202-amino-acid polypeptide reads, in one-letter code: Ras-related protein ORAB-1 (202 aa).

Residues Gly15–Cys23, Tyr33–Thr40, Asp63–Gln67, Asn121–Asp124, and Ser151–Lys153 contribute to the GTP site. An Effector region motif is present at residues Tyr37 to Phe45. A disordered region spans residues Met173–Cys202. Residues Gly180 to Lys195 are compositionally biased toward polar residues. 2 S-geranylgeranyl cysteine lipidation sites follow: Cys201 and Cys202.

The protein belongs to the small GTPase superfamily. Rab family.

Its subcellular location is the cell membrane. Functionally, protein transport. Probably involved in vesicular traffic. The chain is Ras-related protein ORAB-1 from Diplobatis ommata (Ocellated electric ray).